The primary structure comprises 420 residues: Serine hydroxymethyltransferase (420 aa).

(6S)-5,6,7,8-tetrahydrofolate contacts are provided by residues leucine 121 and 125 to 127 (GHL). Lysine 230 carries the post-translational modification N6-(pyridoxal phosphate)lysine. (6S)-5,6,7,8-tetrahydrofolate is bound by residues glutamate 246 and 354 to 356 (SPF).

Belongs to the SHMT family. Homodimer. Requires pyridoxal 5'-phosphate as cofactor.

The protein localises to the cytoplasm. The catalysed reaction is (6R)-5,10-methylene-5,6,7,8-tetrahydrofolate + glycine + H2O = (6S)-5,6,7,8-tetrahydrofolate + L-serine. The protein operates within one-carbon metabolism; tetrahydrofolate interconversion. Its pathway is amino-acid biosynthesis; glycine biosynthesis; glycine from L-serine: step 1/1. Functionally, catalyzes the reversible interconversion of serine and glycine with tetrahydrofolate (THF) serving as the one-carbon carrier. This reaction serves as the major source of one-carbon groups required for the biosynthesis of purines, thymidylate, methionine, and other important biomolecules. Also exhibits THF-independent aldolase activity toward beta-hydroxyamino acids, producing glycine and aldehydes, via a retro-aldol mechanism. The protein is Serine hydroxymethyltransferase of Rickettsia typhi (strain ATCC VR-144 / Wilmington).